The chain runs to 314 residues: tRNA dimethylallyltransferase 1 (314 aa).

ATP is bound at residue 8-15 (GPTGSGKS). 10-15 (TGSGKS) is a substrate binding site.

The protein belongs to the IPP transferase family. In terms of assembly, monomer. It depends on Mg(2+) as a cofactor.

The catalysed reaction is adenosine(37) in tRNA + dimethylallyl diphosphate = N(6)-dimethylallyladenosine(37) in tRNA + diphosphate. Functionally, catalyzes the transfer of a dimethylallyl group onto the adenine at position 37 in tRNAs that read codons beginning with uridine, leading to the formation of N6-(dimethylallyl)adenosine (i(6)A). This Mycobacterium ulcerans (strain Agy99) protein is tRNA dimethylallyltransferase 1.